A 333-amino-acid chain; its full sequence is Holliday junction branch migration complex subunit RuvB (333 aa).

The tract at residues 1–182 is large ATPase domain (RuvB-L); sequence MDERLVSGSA…FGVISRLEYY (182 aa). ATP-binding positions include L21, R22, G63, K66, T67, T68, 129-131, R172, Y182, and R219; that span reads EDY. Mg(2+) is bound at residue T67. The interval 183-253 is small ATPAse domain (RuvB-S); sequence QVDQLAQIIE…LAVEALERLQ (71 aa). Residues 256-333 form a head domain (RuvB-H) region; that stretch reads RLGLDHIDHK…AHLGMEVPKR (78 aa). Residues R311 and R316 each contribute to the DNA site.

The protein belongs to the RuvB family. In terms of assembly, homohexamer. Forms an RuvA(8)-RuvB(12)-Holliday junction (HJ) complex. HJ DNA is sandwiched between 2 RuvA tetramers; dsDNA enters through RuvA and exits via RuvB. An RuvB hexamer assembles on each DNA strand where it exits the tetramer. Each RuvB hexamer is contacted by two RuvA subunits (via domain III) on 2 adjacent RuvB subunits; this complex drives branch migration. In the full resolvosome a probable DNA-RuvA(4)-RuvB(12)-RuvC(2) complex forms which resolves the HJ.

It localises to the cytoplasm. The enzyme catalyses ATP + H2O = ADP + phosphate + H(+). In terms of biological role, the RuvA-RuvB-RuvC complex processes Holliday junction (HJ) DNA during genetic recombination and DNA repair, while the RuvA-RuvB complex plays an important role in the rescue of blocked DNA replication forks via replication fork reversal (RFR). RuvA specifically binds to HJ cruciform DNA, conferring on it an open structure. The RuvB hexamer acts as an ATP-dependent pump, pulling dsDNA into and through the RuvAB complex. RuvB forms 2 homohexamers on either side of HJ DNA bound by 1 or 2 RuvA tetramers; 4 subunits per hexamer contact DNA at a time. Coordinated motions by a converter formed by DNA-disengaged RuvB subunits stimulates ATP hydrolysis and nucleotide exchange. Immobilization of the converter enables RuvB to convert the ATP-contained energy into a lever motion, pulling 2 nucleotides of DNA out of the RuvA tetramer per ATP hydrolyzed, thus driving DNA branch migration. The RuvB motors rotate together with the DNA substrate, which together with the progressing nucleotide cycle form the mechanistic basis for DNA recombination by continuous HJ branch migration. Branch migration allows RuvC to scan DNA until it finds its consensus sequence, where it cleaves and resolves cruciform DNA. This chain is Holliday junction branch migration complex subunit RuvB, found in Geobacillus thermodenitrificans (strain NG80-2).